Here is a 134-residue protein sequence, read N- to C-terminus: Ribosome-binding factor A (134 aa).

Belongs to the RbfA family. Monomer. Binds 30S ribosomal subunits, but not 50S ribosomal subunits or 70S ribosomes.

The protein resides in the cytoplasm. Functionally, one of several proteins that assist in the late maturation steps of the functional core of the 30S ribosomal subunit. Associates with free 30S ribosomal subunits (but not with 30S subunits that are part of 70S ribosomes or polysomes). Required for efficient processing of 16S rRNA. May interact with the 5'-terminal helix region of 16S rRNA. The sequence is that of Ribosome-binding factor A from Rhizobium leguminosarum bv. trifolii (strain WSM2304).